Reading from the N-terminus, the 370-residue chain is DNA replication and repair protein RecF (370 aa).

Position 30–37 (30–37) interacts with ATP; sequence GENAQGKT.

This sequence belongs to the RecF family.

Its subcellular location is the cytoplasm. Its function is as follows. The RecF protein is involved in DNA metabolism; it is required for DNA replication and normal SOS inducibility. RecF binds preferentially to single-stranded, linear DNA. It also seems to bind ATP. The protein is DNA replication and repair protein RecF of Bacillus velezensis (strain DSM 23117 / BGSC 10A6 / LMG 26770 / FZB42) (Bacillus amyloliquefaciens subsp. plantarum).